We begin with the raw amino-acid sequence, 243 residues long: HTH-type transcriptional repressor NagR (243 aa).

The HTH gntR-type domain occupies 9–77 (IPIYYQIMEQ…KGRGTFVSKP (69 aa)). Residues 37 to 56 (EREYAEQFGISRMTVRQALS) constitute a DNA-binding region (H-T-H motif). Residues 89–90 (FT), 133–135 (RVR), Glu-145, 165–167 (SIY), Glu-222, and Tyr-228 each bind alpha-D-glucosamine 6-phosphate. N-acetyl-D-glucosamine 6-phosphate contacts are provided by residues 89-90 (FT), 133-135 (RVR), Glu-145, 165-167 (SIY), Glu-222, and Tyr-228.

Homodimer. Forms dimers via the C-terminal effector-binding domain. At high concentrations, probably forms polymers along the DNA.

Binding to DNA is allosterically inhibited by an effector molecule. Binding of the effector to the C-terminal domain leads to a conformational change that modulates binding to DNA and thereby regulates transcription of the target genes. Glucosamine-6-phosphate (GlcN6P) and/or N-acetylglucosamine-6-phosphate (GlcNAc6P) are putative effectors of NagR. Binding of GlcNAc6P may prevent the protein-protein interactions responsible for polymerization along the DNA, but not the specific DNA binding. In terms of biological role, main transcriptional repressor of genes involved in N-acetylglucosamine (GlcNAc) transport and utilization. Represses the expression of the nagAB and nagP operons by binding directly within their upstream regions. Binds to the DNA consensus sequence 5'-ATTGGTATAGACAACT-3'. Also acts as a weak repressor of mapB expression. The polypeptide is HTH-type transcriptional repressor NagR (Bacillus subtilis (strain 168)).